The sequence spans 65 residues: Large ribosomal subunit protein bL35 (65 aa).

Belongs to the bacterial ribosomal protein bL35 family.

This Burkholderia ambifaria (strain MC40-6) protein is Large ribosomal subunit protein bL35.